Here is a 373-residue protein sequence, read N- to C-terminus: UDP-N-acetylglucosamine--N-acetylmuramyl-(pentapeptide) pyrophosphoryl-undecaprenol N-acetylglucosamine transferase (373 aa).

Residues 15–17, N126, R170, S198, and Q300 each bind UDP-N-acetyl-alpha-D-glucosamine; that span reads TGG.

Belongs to the glycosyltransferase 28 family. MurG subfamily.

It localises to the cell inner membrane. It catalyses the reaction di-trans,octa-cis-undecaprenyl diphospho-N-acetyl-alpha-D-muramoyl-L-alanyl-D-glutamyl-meso-2,6-diaminopimeloyl-D-alanyl-D-alanine + UDP-N-acetyl-alpha-D-glucosamine = di-trans,octa-cis-undecaprenyl diphospho-[N-acetyl-alpha-D-glucosaminyl-(1-&gt;4)]-N-acetyl-alpha-D-muramoyl-L-alanyl-D-glutamyl-meso-2,6-diaminopimeloyl-D-alanyl-D-alanine + UDP + H(+). Its pathway is cell wall biogenesis; peptidoglycan biosynthesis. Its function is as follows. Cell wall formation. Catalyzes the transfer of a GlcNAc subunit on undecaprenyl-pyrophosphoryl-MurNAc-pentapeptide (lipid intermediate I) to form undecaprenyl-pyrophosphoryl-MurNAc-(pentapeptide)GlcNAc (lipid intermediate II). This is UDP-N-acetylglucosamine--N-acetylmuramyl-(pentapeptide) pyrophosphoryl-undecaprenol N-acetylglucosamine transferase from Methylobacterium nodulans (strain LMG 21967 / CNCM I-2342 / ORS 2060).